The following is a 362-amino-acid chain: Nicotinate-nucleotide--dimethylbenzimidazole phosphoribosyltransferase (362 aa).

The active-site Proton acceptor is Glu321.

This sequence belongs to the CobT family.

It carries out the reaction 5,6-dimethylbenzimidazole + nicotinate beta-D-ribonucleotide = alpha-ribazole 5'-phosphate + nicotinate + H(+). It participates in nucleoside biosynthesis; alpha-ribazole biosynthesis; alpha-ribazole from 5,6-dimethylbenzimidazole: step 1/2. Functionally, catalyzes the synthesis of alpha-ribazole-5'-phosphate from nicotinate mononucleotide (NAMN) and 5,6-dimethylbenzimidazole (DMB). The sequence is that of Nicotinate-nucleotide--dimethylbenzimidazole phosphoribosyltransferase from Clostridium tetani (strain Massachusetts / E88).